Reading from the N-terminus, the 417-residue chain is Serpin H1 (417 aa).

An N-terminal signal peptide occupies residues 1–17; the sequence is MRSLLLGTLCLLAVALA. Position 93 is an N6-succinyllysine (K93). Residues N119 and N124 are each glycosylated (N-linked (GlcNAc...) asparagine). S140 is modified (phosphoserine). K206 carries the post-translational modification N6-acetyllysine. K295 is modified (N6-succinyllysine). Residue K318 is modified to N6-acetyllysine. A glycan (N-linked (GlcNAc...) asparagine) is linked at N394. The Prevents secretion from ER motif lies at 414–417; the sequence is RDEL.

Belongs to the serpin family.

The protein resides in the endoplasmic reticulum lumen. Functionally, binds specifically to collagen. Could be involved as a chaperone in the biosynthetic pathway of collagen. This Mus musculus (Mouse) protein is Serpin H1 (Serpinh1).